Reading from the N-terminus, the 153-residue chain is Lipoprotein signal peptidase (153 aa).

The next 2 membrane-spanning stretches (helical) occupy residues Ile-52–Val-72 and Gly-81–Ile-101. Residues Asp-111 and Asp-129 contribute to the active site. The helical transmembrane segment at Ile-124–Leu-144 threads the bilayer.

The protein belongs to the peptidase A8 family.

The protein resides in the cell membrane. The catalysed reaction is Release of signal peptides from bacterial membrane prolipoproteins. Hydrolyzes -Xaa-Yaa-Zaa-|-(S,diacylglyceryl)Cys-, in which Xaa is hydrophobic (preferably Leu), and Yaa (Ala or Ser) and Zaa (Gly or Ala) have small, neutral side chains.. It functions in the pathway protein modification; lipoprotein biosynthesis (signal peptide cleavage). Functionally, this protein specifically catalyzes the removal of signal peptides from prolipoproteins. This chain is Lipoprotein signal peptidase, found in Bacillus velezensis (strain DSM 23117 / BGSC 10A6 / LMG 26770 / FZB42) (Bacillus amyloliquefaciens subsp. plantarum).